A 251-amino-acid polypeptide reads, in one-letter code: tRNA (guanine-N(1)-)-methyltransferase (251 aa).

Residues Gly113 and 133–138 (IGDYVL) contribute to the S-adenosyl-L-methionine site.

It belongs to the RNA methyltransferase TrmD family. In terms of assembly, homodimer.

Its subcellular location is the cytoplasm. The enzyme catalyses guanosine(37) in tRNA + S-adenosyl-L-methionine = N(1)-methylguanosine(37) in tRNA + S-adenosyl-L-homocysteine + H(+). Its function is as follows. Specifically methylates guanosine-37 in various tRNAs. This chain is tRNA (guanine-N(1)-)-methyltransferase, found in Pectobacterium atrosepticum (strain SCRI 1043 / ATCC BAA-672) (Erwinia carotovora subsp. atroseptica).